The primary structure comprises 179 residues: Large ribosomal subunit protein uL5 (179 aa).

The protein belongs to the universal ribosomal protein uL5 family. Part of the 50S ribosomal subunit; part of the 5S rRNA/L5/L18/L25 subcomplex. Contacts the 5S rRNA and the P site tRNA. Forms a bridge to the 30S subunit in the 70S ribosome.

Its function is as follows. This is one of the proteins that bind and probably mediate the attachment of the 5S RNA into the large ribosomal subunit, where it forms part of the central protuberance. In the 70S ribosome it contacts protein S13 of the 30S subunit (bridge B1b), connecting the 2 subunits; this bridge is implicated in subunit movement. Contacts the P site tRNA; the 5S rRNA and some of its associated proteins might help stabilize positioning of ribosome-bound tRNAs. The polypeptide is Large ribosomal subunit protein uL5 (Ectopseudomonas mendocina (strain ymp) (Pseudomonas mendocina)).